Consider the following 544-residue polypeptide: Propane 2-monooxygenase, hydroxylase component large subunit (544 aa).

Residues Glu97, Glu127, His130, Glu192, Glu226, and His229 each coordinate Fe cation.

The protein belongs to the TmoA/XamoA family. As to quaternary structure, the propane 2-monooxygenase multicomponent enzyme system is composed of an electron transfer component and a monooxygenase component interacting with the effector protein PrmD. The electron transfer component is composed of a reductase (PrmB), and the monooxygenase component is formed by a large subunit (PrmA) and a small subunit (PrmC). Probably requires the presence of the chaperonin-like protein PrmG to ensure a productive folding, resulting of a soluble PrmA, which leads to the active form of PrmABCD. Fe(2+) is required as a cofactor.

It carries out the reaction propane + NADH + O2 + H(+) = propan-2-ol + NAD(+) + H2O. Functionally, component of the propane 2-monooxygenase multicomponent enzyme system which is involved in the degradation of propane via the O2-dependent hydroxylation of propane. Also able to catalyze the oxidation the water contaminant N-nitrosodimethylamine (NDMA). The sequence is that of Propane 2-monooxygenase, hydroxylase component large subunit from Rhodococcus jostii (strain RHA1).